The primary structure comprises 1064 residues: MTITEAVAVMEEAIETVVGHATEAQTERDRQIAEDNGAEMVTGTTAPAKSTPTQAQTEAEKKAERLRKLQAMKEKHAQKEAKEAAVTAGSTRMLLAEMDQKASGTPGPNSPVAGAMSPAPTSPAPPMPYAGKFDPKAIAKSSKAARPQSPTRLGDVKLAAPAPKPLGLKKEANLKGAGLLPANRAKSSTKRKIDMDDEEVIKRKLVKLPDFVPENADSTPDAEGEGEEEADDLDLLMAQNEEEMAEAHRVLQERRDERIQKEGMAMDVDTETPNGETKDEAENEANVESKDEAVLPAPSMDVDEDVDPLDAFMADLEQTGSAGGIGSVPARQKQKAGKGFEPEAYFSDDDYGYEEDKADPSSILAMASKKKKKDIPTIDYSKIELNQIRKNFWVEPQELSQMTEDDIADLRLELDGIKVSGKNVPKPVQKWSQCGLTRPILDVVEGLGYEKPTSIQMQALPVIMSGRDVIGVAKTGSGKTMAFVLPMLRHIKDQDPVTGDDGAIALIMTPTRELCTQIYSDLLPFAKALKLRAIAAYGGNAIKDQIAELKRGAEIIVATPGRMIDLLAANSGRVTNLKRATYLVLDEADRMFDMGFEPQVMKIFNNVRPDRQTILFSATMPRIIDALTKKVLREPVEIQVGGRSVVAPEITQIVEILDEGKKFVRLLELLGELYADDDDVRALIFVERQEKADDLLREVLRRGYGCMSIHGGKDQEDRNSTISDFKKGVCPIMIATSVAARGLDVKQLKLVVNYDAPNHLEDYVHRAGRTGRAGNTGTAVTFITEEQENCAPGIAKALEQSGQPVPEQLNEMRKAWKEKVKTGKAKDASGFGGKGLERLDKEREAARVRERKTHKAEGEEDDFKEEETAEDAAKKDKAKSAILAAASAIVSRESAKADASEAKPLPAAAEGAVKGGVTVNAGKGGALDKAASAISEINARLARAGQLRPGQPIDNKGPDAGAFHATLEINDFPQKARWAVTNRTNVAKILEATSTSITTKGNYYPPGKEPPSGSDPKLYILIEGDTELAVGKALSELTRLLREGTIAAADAESRAPASGRYTIA.

Disordered stretches follow at residues 22 to 63 (TEAQ…EKKA), 97 to 170 (EMDQ…GLKK), 211 to 231 (FVPE…EEAD), 257 to 305 (ERIQ…VDED), and 320 to 346 (GSAG…EAYF). Residues 42–57 (TGTTAPAKSTPTQAQT) are compositionally biased toward polar residues. Residues 220 to 231 (PDAEGEGEEEAD) show a composition bias toward acidic residues. Residues 429-457 (QKWSQCGLTRPILDVVEGLGYEKPTSIQM) carry the Q motif motif. Residues 460–638 (LPVIMSGRDV…KKVLREPVEI (179 aa)) form the Helicase ATP-binding domain. 473-480 (AKTGSGKT) is an ATP binding site. The DEAD box signature appears at 586–589 (DEAD). Residues 665–813 (RLLELLGELY…PVPEQLNEMR (149 aa)) enclose the Helicase C-terminal domain. A disordered region spans residues 820-872 (VKTGKAKDASGFGGKGLERLDKEREAARVRERKTHKAEGEEDDFKEEETAEDA). A compositionally biased stretch (basic and acidic residues) spans 835–848 (GLERLDKEREAARV). The segment covering 858–870 (GEEDDFKEEETAE) has biased composition (acidic residues).

Belongs to the DEAD box helicase family. DDX46/PRP5 subfamily.

It localises to the nucleus. The enzyme catalyses ATP + H2O = ADP + phosphate + H(+). Functionally, ATP-dependent RNA helicase involved spliceosome assembly and in nuclear splicing. Catalyzes an ATP-dependent conformational change of U2 snRNP. Bridges U1 and U2 snRNPs and enables stable U2 snRNP association with intron RNA. This is Pre-mRNA-processing ATP-dependent RNA helicase PRP5 (PRP5) from Chaetomium globosum (strain ATCC 6205 / CBS 148.51 / DSM 1962 / NBRC 6347 / NRRL 1970) (Soil fungus).